The primary structure comprises 404 residues: Cysteine desulfurase IscS (404 aa).

Residues 75 to 76 (AT), Asn155, Gln183, and 203 to 205 (SGH) each bind pyridoxal 5'-phosphate. At Lys206 the chain carries N6-(pyridoxal phosphate)lysine. Thr243 contacts pyridoxal 5'-phosphate. The Cysteine persulfide intermediate role is filled by Cys328. Cys328 provides a ligand contact to [2Fe-2S] cluster.

Belongs to the class-V pyridoxal-phosphate-dependent aminotransferase family. NifS/IscS subfamily. As to quaternary structure, homodimer. Forms a heterotetramer with IscU, interacts with other sulfur acceptors. The cofactor is pyridoxal 5'-phosphate.

It localises to the cytoplasm. It catalyses the reaction (sulfur carrier)-H + L-cysteine = (sulfur carrier)-SH + L-alanine. The protein operates within cofactor biosynthesis; iron-sulfur cluster biosynthesis. Its function is as follows. Master enzyme that delivers sulfur to a number of partners involved in Fe-S cluster assembly, tRNA modification or cofactor biosynthesis. Catalyzes the removal of elemental sulfur atoms from cysteine to produce alanine. Functions as a sulfur delivery protein for Fe-S cluster synthesis onto IscU, an Fe-S scaffold assembly protein, as well as other S acceptor proteins. In Shewanella halifaxensis (strain HAW-EB4), this protein is Cysteine desulfurase IscS.